The sequence spans 477 residues: ETS translocation variant 1 (477 aa).

The residue at position 94 (Ser94) is a Phosphoserine. Residues 128–178 (PQVGMRPSNPPTPSSTPVSPLHHASPNSAHTSKPDRAFPAHLPPSQPIQDS) are disordered. Ser191 and Ser216 each carry phosphoserine; by RPS6KA1 and RPS6KA5. Lys317 participates in a covalent cross-link: Glycyl lysine isopeptide (Lys-Gly) (interchain with G-Cter in SUMO2). A DNA-binding region (ETS) is located at residues 335 to 415 (LQLWQFLVAL…AGERYVYKFV (81 aa)).

It belongs to the ETS family. Post-translationally, sumoylated. Phosphorylated at Ser-191 and Ser-216 by RPS6KA1 and RPS6KA5; phosphorylation activates transcriptional activity.

The protein localises to the nucleus. Functionally, transcriptional activator that binds to DNA sequences containing the consensus pentanucleotide 5'-CGGA[AT]-3'. Required for olfactory dopaminergic neuron differentiation; may directly activate expression of tyrosine hydroxylase (TH). This Bos taurus (Bovine) protein is ETS translocation variant 1 (ETV1).